Reading from the N-terminus, the 227-residue chain is Cytochrome c oxidase subunit 2 (227 aa).

Residues 1–14 (MAYPMQLGLQDATS) lie on the Mitochondrial intermembrane side of the membrane. Residues 15 to 45 (PIMEELTDFHDHTLMIVFLISTLVLYIISMM) traverse the membrane as a helical segment. Residues 46 to 59 (LTTKLTHTSTMDAQ) are Mitochondrial matrix-facing. The chain crosses the membrane as a helical span at residues 60 to 87 (EVETIWTVLPAVILVMIALPSLRILYMM). At 88–227 (DEINDPYLTV…QFESWASSMT (140 aa)) the chain is on the mitochondrial intermembrane side. 6 residues coordinate Cu cation: histidine 161, cysteine 196, glutamate 198, cysteine 200, histidine 204, and methionine 207. Mg(2+) is bound at residue glutamate 198.

This sequence belongs to the cytochrome c oxidase subunit 2 family. As to quaternary structure, component of the cytochrome c oxidase (complex IV, CIV), a multisubunit enzyme composed of 14 subunits. The complex is composed of a catalytic core of 3 subunits MT-CO1, MT-CO2 and MT-CO3, encoded in the mitochondrial DNA, and 11 supernumerary subunits COX4I, COX5A, COX5B, COX6A, COX6B, COX6C, COX7A, COX7B, COX7C, COX8 and NDUFA4, which are encoded in the nuclear genome. The complex exists as a monomer or a dimer and forms supercomplexes (SCs) in the inner mitochondrial membrane with NADH-ubiquinone oxidoreductase (complex I, CI) and ubiquinol-cytochrome c oxidoreductase (cytochrome b-c1 complex, complex III, CIII), resulting in different assemblies (supercomplex SCI(1)III(2)IV(1) and megacomplex MCI(2)III(2)IV(2)). Found in a complex with TMEM177, COA6, COX18, COX20, SCO1 and SCO2. Interacts with TMEM177 in a COX20-dependent manner. Interacts with COX20. Interacts with COX16. Cu cation serves as cofactor.

Its subcellular location is the mitochondrion inner membrane. The enzyme catalyses 4 Fe(II)-[cytochrome c] + O2 + 8 H(+)(in) = 4 Fe(III)-[cytochrome c] + 2 H2O + 4 H(+)(out). In terms of biological role, component of the cytochrome c oxidase, the last enzyme in the mitochondrial electron transport chain which drives oxidative phosphorylation. The respiratory chain contains 3 multisubunit complexes succinate dehydrogenase (complex II, CII), ubiquinol-cytochrome c oxidoreductase (cytochrome b-c1 complex, complex III, CIII) and cytochrome c oxidase (complex IV, CIV), that cooperate to transfer electrons derived from NADH and succinate to molecular oxygen, creating an electrochemical gradient over the inner membrane that drives transmembrane transport and the ATP synthase. Cytochrome c oxidase is the component of the respiratory chain that catalyzes the reduction of oxygen to water. Electrons originating from reduced cytochrome c in the intermembrane space (IMS) are transferred via the dinuclear copper A center (CU(A)) of subunit 2 and heme A of subunit 1 to the active site in subunit 1, a binuclear center (BNC) formed by heme A3 and copper B (CU(B)). The BNC reduces molecular oxygen to 2 water molecules using 4 electrons from cytochrome c in the IMS and 4 protons from the mitochondrial matrix. The protein is Cytochrome c oxidase subunit 2 (MT-CO2) of Cratogeomys bursarius (Plains pocket gopher).